Reading from the N-terminus, the 422-residue chain is G-protein coupled receptor 83 (422 aa).

Residues 1-17 (MNVPPVLLLFLLSSVRA) form the signal peptide. Over 18-70 (TEQPQVVTEHPSMDAALTGANASHFWANYTFSDWQNFVGRRRYGAESQNPTVK) the chain is Extracellular. Residues 71–91 (ALLIVAYSFIIVFSLFGNVLV) traverse the membrane as a helical segment. At 92–106 (CHVIFKNQRMHSATS) the chain is on the cytoplasmic side. Residues 107–127 (LFIVNLAVADIMITLLNTPFT) traverse the membrane as a helical segment. Residues 128-143 (LVRFVNSTWVFGKGMC) lie on the Extracellular side of the membrane. The cysteines at positions 143 and 223 are disulfide-linked. A helical transmembrane segment spans residues 144 to 166 (HVSRFAQYCSLHVSALTLTAIAV). Over 167–184 (DRHQVIMHPLKPRISITK) the chain is Cytoplasmic. Residues 185 to 205 (GVIYIAVIWVMATFFSLPHAI) traverse the membrane as a helical segment. At 206–236 (CQKLFTFKYSEDIVRSLCLPDFPEPADLFWK) the chain is on the extracellular side. Residues 237–257 (YLDLATFILLYLLPLFIISVA) traverse the membrane as a helical segment. At 258 to 292 (YARVAKKLWLCNTIGDVTTEQYLALRRKKKTTVKM) the chain is on the cytoplasmic side. The helical transmembrane segment at 293–313 (LVLVVVLFALCWFPLNCYVLL) threads the bilayer. Residues 314-326 (LSSKAIHTNNALY) lie on the Extracellular side of the membrane. The chain crosses the membrane as a helical span at residues 327–347 (FAFHWFAMSSTCYNPFIYCWL). Residues 348–422 (NENFRVELKA…SSVEPTVAVS (75 aa)) lie on the Cytoplasmic side of the membrane. A disordered region spans residues 401-422 (PSSQIQSGKTDLSSVEPTVAVS).

This sequence belongs to the G-protein coupled receptor 1 family. As to expression, expressed preferentially in brain, and its neuronal expression is relegated to limbic brain regions, particularly in forebrain.

The protein localises to the cell membrane. Its function is as follows. G-protein coupled receptor for PEN, a neuropeptide produced from the precursor protein, proSAAS (encoded by PCSK1N). Acts through a G(i)- and G(q)-alpha-alpha-mediated pathway in response to PEN. Plays a role in food intake and body weight regulation. May contribute to the regulation of anxiety-related behaviors. The chain is G-protein coupled receptor 83 from Rattus norvegicus (Rat).